Consider the following 462-residue polypeptide: Semenogelin-1 (462 aa).

An N-terminal signal peptide occupies residues 1-23 (MKPNIIFVLSLLLILEKQAAVMG). Gln24 bears the Pyrrolidone carboxylic acid mark. A disordered region spans residues 24 to 61 (QKGGSKGRLPSEFSQFPHGQKGQHYSGQKGKQQTESKG). A compositionally biased stretch (polar residues) spans 46–61 (QHYSGQKGKQQTESKG). A run of 3 repeats spans residues 70–129 (HVDA…VVIH), 141–200 (NPSQ…QTEE), and 201–260 (LVAN…QDEL). Residues 70 to 439 (HVDANDHDQS…SHGGLDIVII (370 aa)) are repeat-rich region. Disordered regions lie at residues 131–157 (KGGKAHRGTQNPSQDQGNSPSGKGISS) and 173–194 (KEQTSVSGAQKGRKQGGSQSSY). Residues 138-157 (GTQNPSQDQGNSPSGKGISS) show a composition bias toward polar residues. The segment at 164-283 (ERLWVHGLSK…NQDQQHGRKA (120 aa)) is interaction with EPPIN. The 2 X 60 AA tandem repeats, type 1 stretch occupies residues 261–380 (LVYNKNQHQT…QRSIYSQTEK (120 aa)). The tract at residues 270–432 (TKNLNQDQQH…KGRHQHGSHG (163 aa)) is disordered. Polar residues-rich tracts occupy residues 308 to 317 (DVSQSSIYSQ), 324 to 335 (GKSQKQITIPSQ), and 343 to 352 (ANKISYQSSS). One copy of the 3-2 repeat lies at 381–439 (LVAGKSQIQAPNPKQEPWHGENAKGESGQSTNREQDLLSHEQKGRHQHGSHGGLDIVII). Positions 413 to 424 (REQDLLSHEQKG) are enriched in basic and acidic residues.

The protein belongs to the semenogelin family. In terms of assembly, occurs in disulfide-linked complexes which may also contain two less abundant 71- and 76-kDa semenogelin-related polypeptides. Interacts with EPPIN (via C-terminus); Cys-239 is a critical amino acid for both binding to EPPIN. Transglutaminase substrate. Post-translationally, rapidly cleaved after ejaculation by KLK3/PSA, resulting in liquefaction of the semen coagulum and the progressive release of motile spermatozoa. As to expression, seminal vesicle.

Its subcellular location is the secreted. In terms of biological role, predominant protein in semen. It participates in the formation of a gel matrix entrapping the accessory gland secretions and ejaculated spermatozoa. Fragments of semenogelin and/or fragments of the related proteins may contribute to the activation of progressive sperm movements as the gel-forming proteins are fragmented by KLK3/PSA. Its function is as follows. Alpha-inhibin-92 and alpha-inhibin-31, derived from the proteolytic degradation of semenogelin, inhibit the secretion of pituitary follicle-stimulating hormone. This Homo sapiens (Human) protein is Semenogelin-1 (SEMG1).